We begin with the raw amino-acid sequence, 579 residues long: 6-deoxy-6-sulfo-D-gluconate dehydratase (579 aa).

The [4Fe-4S] cluster site is built by cysteine 59, cysteine 127, and cysteine 200.

This sequence belongs to the IlvD/Edd family. In terms of assembly, homodimer. [4Fe-4S] cluster serves as cofactor.

It catalyses the reaction 6-deoxy-6-sulfo-D-gluconate = 2-dehydro-3,6-dideoxy-6-sulfo-D-gluconate + H2O. Functionally, catalyzes the dehydration of 6-deoxy-6-sulfo-D-gluconate to 2-dehydro-3,6-dideoxy-6-sulfo-D-gluconate. Is involved in a degradation pathway of sulfoquinovose (SQ) that allows P.putida SQ1 to use SQ as the sole carbon and energy source for growth. The chain is 6-deoxy-6-sulfo-D-gluconate dehydratase from Pseudomonas putida (Arthrobacter siderocapsulatus).